A 253-amino-acid polypeptide reads, in one-letter code: MSRTVSKLVINNLDLYYGEFHALKDVNLDIEEKEITAFIGPSGCGKSTLLKSINRMNDLVKNCKITGDITLEGEDVYRQLDINQLRKKVGMVFQKPNPFPMSIYDNVAFGPRTHGIHSKAELDDIVERSLKQAALWDEVKDRLHKSALGMSGGQQQRLCIARALAIEPDVLLMDEPTSALDPISTAKIEELVIQLKKNYTIVIVTHNMQQAVRISDKTAFFLMGEVVEYNKTSQLFSLPQDERTENYITGRFG.

Residues L8–I248 form the ABC transporter domain. Position 40-47 (G40–S47) interacts with ATP.

Belongs to the ABC transporter superfamily. Phosphate importer (TC 3.A.1.7) family. In terms of assembly, the complex is composed of two ATP-binding proteins (PstB), two transmembrane proteins (PstC and PstA) and a solute-binding protein (PstS).

Its subcellular location is the cell membrane. It catalyses the reaction phosphate(out) + ATP + H2O = ADP + 2 phosphate(in) + H(+). Its function is as follows. Part of the ABC transporter complex PstSACB involved in phosphate import. Responsible for energy coupling to the transport system. This chain is Phosphate import ATP-binding protein PstB 3, found in Streptococcus agalactiae serotype III (strain NEM316).